A 393-amino-acid chain; its full sequence is Phosphoenolpyruvate/phosphate translocator 3, chloroplastic (393 aa).

The transit peptide at M1–R65 directs the protein to the chloroplast. 7 helical membrane-spanning segments follow: residues L89–F109, Y124–L144, A164–V183, F195–L217, L232–Y249, I270–F290, and T362–Y382. Residues P123–S228 form the EamA domain.

Belongs to the TPT transporter family. PPT (TC 2.A.7.9) subfamily.

It localises to the plastid. It is found in the chloroplast membrane. Its function is as follows. Phosphoenolpyruvate/phosphate translocator that transports phosphoenolpyruvate (PEP) and dihydroxyacetone phosphate. The sequence is that of Phosphoenolpyruvate/phosphate translocator 3, chloroplastic (PPT3) from Oryza sativa subsp. japonica (Rice).